A 375-amino-acid polypeptide reads, in one-letter code: tRNA-specific 2-thiouridylase MnmA (375 aa).

ATP-binding positions include 8 to 15 and Met-34; that span reads GLSGGVDS. The interval 104–106 is interaction with target base in tRNA; it reads NPD. The active-site Nucleophile is Cys-109. A disulfide bridge links Cys-109 with Cys-208. Position 134 (Gly-134) interacts with ATP. Residues 158–160 are interaction with tRNA; sequence KDQ. Cys-208 functions as the Cysteine persulfide intermediate in the catalytic mechanism. An interaction with tRNA region spans residues 321-322; that stretch reads RY.

This sequence belongs to the MnmA/TRMU family.

It is found in the cytoplasm. It catalyses the reaction S-sulfanyl-L-cysteinyl-[protein] + uridine(34) in tRNA + AH2 + ATP = 2-thiouridine(34) in tRNA + L-cysteinyl-[protein] + A + AMP + diphosphate + H(+). Functionally, catalyzes the 2-thiolation of uridine at the wobble position (U34) of tRNA, leading to the formation of s(2)U34. The protein is tRNA-specific 2-thiouridylase MnmA of Mycoplasma mycoides subsp. mycoides SC (strain CCUG 32753 / NCTC 10114 / PG1).